A 264-amino-acid chain; its full sequence is Hydroxyethylthiazole kinase (264 aa).

Residue methionine 47 participates in substrate binding. ATP-binding residues include arginine 123 and serine 169. Glycine 196 contacts substrate.

This sequence belongs to the Thz kinase family. The cofactor is Mg(2+).

The catalysed reaction is 5-(2-hydroxyethyl)-4-methylthiazole + ATP = 4-methyl-5-(2-phosphooxyethyl)-thiazole + ADP + H(+). The protein operates within cofactor biosynthesis; thiamine diphosphate biosynthesis; 4-methyl-5-(2-phosphoethyl)-thiazole from 5-(2-hydroxyethyl)-4-methylthiazole: step 1/1. In terms of biological role, catalyzes the phosphorylation of the hydroxyl group of 4-methyl-5-beta-hydroxyethylthiazole (THZ). The protein is Hydroxyethylthiazole kinase of Brachyspira hyodysenteriae (strain ATCC 49526 / WA1).